The sequence spans 183 residues: uncharacterized protein (183 aa).

It belongs to the asfivirus S183L family.

This is an uncharacterized protein from Ornithodoros (relapsing fever ticks).